A 402-amino-acid chain; its full sequence is Sulfate adenylyltransferase (402 aa).

It belongs to the sulfate adenylyltransferase family.

The catalysed reaction is sulfate + ATP + H(+) = adenosine 5'-phosphosulfate + diphosphate. It participates in sulfur metabolism; hydrogen sulfide biosynthesis; sulfite from sulfate: step 1/3. This is Sulfate adenylyltransferase from Ruthia magnifica subsp. Calyptogena magnifica.